The following is a 433-amino-acid chain: Serine hydroxymethyltransferase (433 aa).

Residues Leu-132 and 136–138 (GHL) each bind (6S)-5,6,7,8-tetrahydrofolate. The residue at position 241 (Lys-241) is an N6-(pyridoxal phosphate)lysine.

The protein belongs to the SHMT family. Homodimer. Pyridoxal 5'-phosphate is required as a cofactor.

It localises to the cytoplasm. It catalyses the reaction (6R)-5,10-methylene-5,6,7,8-tetrahydrofolate + glycine + H2O = (6S)-5,6,7,8-tetrahydrofolate + L-serine. Its pathway is one-carbon metabolism; tetrahydrofolate interconversion. It participates in amino-acid biosynthesis; glycine biosynthesis; glycine from L-serine: step 1/1. Functionally, catalyzes the reversible interconversion of serine and glycine with tetrahydrofolate (THF) serving as the one-carbon carrier. This reaction serves as the major source of one-carbon groups required for the biosynthesis of purines, thymidylate, methionine, and other important biomolecules. Also exhibits THF-independent aldolase activity toward beta-hydroxyamino acids, producing glycine and aldehydes, via a retro-aldol mechanism. The protein is Serine hydroxymethyltransferase of Methylobacterium sp. (strain 4-46).